The following is a 21-amino-acid chain: 23S rRNA methylase leader peptide (21 aa).

In terms of biological role, involved in erythromycin resistance. In Corynebacterium diphtheriae, this protein is 23S rRNA methylase leader peptide.